Reading from the N-terminus, the 240-residue chain is Large ribosomal subunit protein bL25 (240 aa).

2 disordered regions span residues 1–20 (MAENVLSAQKRTEQGKGPAR) and 204–240 (GAAPAAGAAAPAGGAAPAAGAAPAKGGEAKGGDKAKK). Over residues 204–229 (GAAPAAGAAAPAGGAAPAAGAAPAKG) the composition is skewed to low complexity. Residues 230 to 240 (GEAKGGDKAKK) are compositionally biased toward basic and acidic residues.

The protein belongs to the bacterial ribosomal protein bL25 family. CTC subfamily. In terms of assembly, part of the 50S ribosomal subunit; part of the 5S rRNA/L5/L18/L25 subcomplex. Contacts the 5S rRNA. Binds to the 5S rRNA independently of L5 and L18.

Its function is as follows. This is one of the proteins that binds to the 5S RNA in the ribosome where it forms part of the central protuberance. In Anaeromyxobacter sp. (strain K), this protein is Large ribosomal subunit protein bL25.